We begin with the raw amino-acid sequence, 327 residues long: tRNA dimethylallyltransferase (327 aa).

Position 14–21 (14–21) interacts with ATP; sequence GPTASGKT. 16–21 contacts substrate; the sequence is TASGKT. Interaction with substrate tRNA regions lie at residues 39–42 and 163–167; these read DSAL and QRIQR.

The protein belongs to the IPP transferase family. Monomer. Mg(2+) serves as cofactor.

The catalysed reaction is adenosine(37) in tRNA + dimethylallyl diphosphate = N(6)-dimethylallyladenosine(37) in tRNA + diphosphate. Its function is as follows. Catalyzes the transfer of a dimethylallyl group onto the adenine at position 37 in tRNAs that read codons beginning with uridine, leading to the formation of N6-(dimethylallyl)adenosine (i(6)A). This is tRNA dimethylallyltransferase from Xanthomonas oryzae pv. oryzae (strain PXO99A).